A 249-amino-acid chain; its full sequence is Proteasome subunit alpha type-7-1A (249 aa).

This sequence belongs to the peptidase T1A family. In terms of assembly, the 26S proteasome consists of a 20S proteasome core and two 19S regulatory subunits. The 20S proteasome core is composed of 28 subunits that are arranged in four stacked rings, resulting in a barrel-shaped structure. The two end rings are each formed by seven alpha subunits, and the two central rings are each formed by seven beta subunits. The catalytic chamber with the active sites is on the inside of the barrel. As to expression, testis specific.

It is found in the cytoplasm. The protein resides in the nucleus. Its function is as follows. The proteasome is a multicatalytic proteinase complex which is characterized by its ability to cleave peptides with Arg, Phe, Tyr, Leu, and Glu adjacent to the leaving group at neutral or slightly basic pH. The proteasome has an ATP-dependent proteolytic activity. This is Proteasome subunit alpha type-7-1A (Prosalpha4T1) from Drosophila melanogaster (Fruit fly).